The chain runs to 132 residues: Small ribosomal subunit protein uS11 (132 aa).

The protein belongs to the universal ribosomal protein uS11 family. As to quaternary structure, part of the 30S ribosomal subunit.

Its function is as follows. Located on the platform of the 30S subunit. The protein is Small ribosomal subunit protein uS11 of Caldivirga maquilingensis (strain ATCC 700844 / DSM 13496 / JCM 10307 / IC-167).